The primary structure comprises 356 residues: Icosanoyl-CoA 5-desaturase (356 aa).

The chain crosses the membrane as a helical span at residues 5 to 25 (LYFPISISLSLSLEAMASFIA). A disordered region spans residues 38–58 (LDPKIPTKPEPKTETPKPKDD). Residues 42–58 (IPTKPEPKTETPKPKDD) are compositionally biased toward basic and acidic residues. 2 helical membrane passes run 88 to 108 (NAVT…YFSW) and 111 to 131 (FWIS…TLCF). The Histidine box-1 motif lies at 132–137 (HRCLTH). Positions 169–173 (HRYHH) match the Histidine box-2 motif. The chain crosses the membrane as a helical span at residues 236-256 (ALIALLYYVGGFPYIVWGMGF). The short motif at 302–306 (HNNHH) is the Histidine box-3 element.

The protein belongs to the fatty acid desaturase type 1 family. The cofactor is Fe(2+).

The protein resides in the membrane. It catalyses the reaction eicosanoyl-CoA + 2 Fe(II)-[cytochrome b5] + O2 + 2 H(+) = (5Z)-eicosenoyl-CoA + 2 Fe(III)-[cytochrome b5] + 2 H2O. The protein operates within lipid metabolism; monounsaturated fatty acid biosynthesis. Functionally, desaturase involved in the biosynthesis of (5Z)-icos-5-enoate, an unusual monounsaturated fatty acid that makes up to 60% of the total fatty acids in Limnanthes sp. seed oil. Only acts on saturated fatty acids. The protein is Icosanoyl-CoA 5-desaturase of Limnanthes douglasii (Douglas' meadowfoam).